We begin with the raw amino-acid sequence, 213 residues long: Cytokinin riboside 5'-monophosphate phosphoribohydrolase LOG2 (213 aa).

Substrate is bound by residues Glu79, 97–98 (RK), 114–120 (GYGTFEE), and Thr126.

This sequence belongs to the LOG family. Expressed in roots and shoots. Detected in root hairs.

It is found in the cytoplasm. The protein resides in the nucleus. It catalyses the reaction N(6)-(dimethylallyl)adenosine 5'-phosphate + H2O = N(6)-dimethylallyladenine + D-ribose 5-phosphate. The enzyme catalyses 9-ribosyl-trans-zeatin 5'-phosphate + H2O = trans-zeatin + D-ribose 5-phosphate. In terms of biological role, cytokinin-activating enzyme working in the direct activation pathway. Phosphoribohydrolase that converts inactive cytokinin nucleotides to the biologically active free-base forms. This chain is Cytokinin riboside 5'-monophosphate phosphoribohydrolase LOG2 (LOG2), found in Arabidopsis thaliana (Mouse-ear cress).